We begin with the raw amino-acid sequence, 532 residues long: MSAATPSVIRLPRDTSAQHAARPAFVGSDPLTYGEFTARVEAVAARLLSLGTRTGDRIAVWMDKQPRYAEAIVAALEAGCAYVPLDGGQPVSRVRTILADAEPVVLFTDAHHAALLGDDDLPASVTTVVAVGDALPDTVGGIPVAPWESWEQGRAGRVTLLPSLTPGDLAALLYTSGSTGTPKGVQISHGALANFVAWARDELDVGPDDVFAGHASFNFDLSTFDLFTALSCGAAVWIVPDAATKDVTALAEGIRRHRITVWYSVPSVLHLLTTSAALTPEHAASLRYVLFAGEVFPVPQLRALRELLPPGTPLYNLYGPTETNVCTYHRVRPEDLHRATPVPIGLPITGAGTTVVDDAGRTVREPGAIGELHVSGVCVTPGYWRRAEEPVSTAHCRGVHPTGDLVSYEEDGRLVYRGRKDRMVKLSGYRVELGEIEAAALRHPGIAEAAVLVDGSGPKARLRLYYTLCEGAERIGLVELKQHCARHLPTYMVPHGAVRLDRMPLNPNGKTDYRRLGLDAPPRPAAPLGTAR.

The segment at 510–532 (KTDYRRLGLDAPPRPAAPLGTAR) is disordered.

This sequence belongs to the ATP-dependent AMP-binding enzyme family.

The enzyme catalyses holo-[peptidyl-carrier protein] + L-proline + ATP = L-prolyl-[peptidyl-carrier protein] + AMP + diphosphate. Its function is as follows. Involved in the biosynthesis of undecylprodigiosin. Catalyzes the conversion of L-proline to L-prolyl-AMP and the transfer of the L-prolyl group to acyl carrier protein RedO. The sequence is that of L-proline--[L-prolyl-carrier protein] ligase from Streptomyces coelicolor (strain ATCC BAA-471 / A3(2) / M145).